Here is a 147-residue protein sequence, read N- to C-terminus: Hemoglobin subunit gamma-1 (147 aa).

Glycine 2 carries the post-translational modification N-acetylglycine. A Globin domain is found at 3-147; it reads HFTEEDKATI…VASALSSRYH (145 aa). Threonine 13 carries the post-translational modification Phosphothreonine. Residues serine 45, serine 51, and serine 53 each carry the phosphoserine modification. Lysine 60 bears the N6-acetyllysine mark. Histidine 64 contacts heme b. Lysine 83 carries the post-translational modification N6-acetyllysine. Histidine 93 provides a ligand contact to heme b. The residue at position 94 (cysteine 94) is an S-nitrosocysteine. Residue serine 140 is modified to Phosphoserine.

This sequence belongs to the globin family. Heterotetramer of two alpha chains and two gamma chains in fetal hemoglobin (Hb F). Red blood cells.

Functionally, gamma chains make up the fetal hemoglobin F, in combination with alpha chains. In Gorilla gorilla gorilla (Western lowland gorilla), this protein is Hemoglobin subunit gamma-1 (HBG1).